A 323-amino-acid polypeptide reads, in one-letter code: Small ribosomal subunit protein uS3 (323 aa).

One can recognise a KH type-2 domain in the interval 17–86 (IDEFFADELG…DPQIDVQEVD (70 aa)). Positions 251-303 (ADPGVSSEDEEVVTEPVDIGGDDEDVEDIEVVSDDSGNDTETVAEEVEELDAE) are disordered. Over residues 270 to 303 (GGDDEDVEDIEVVSDDSGNDTETVAEEVEELDAE) the composition is skewed to acidic residues.

Belongs to the universal ribosomal protein uS3 family. As to quaternary structure, part of the 30S ribosomal subunit.

In terms of biological role, binds the lower part of the 30S subunit head. This Haloquadratum walsbyi (strain DSM 16790 / HBSQ001) protein is Small ribosomal subunit protein uS3.